A 257-amino-acid chain; its full sequence is MTLAVRVIPCLDVDAGRVVKGVNFENLRDAGDPVELAAAYDAQGADELTFLDVTASTADRGTMLDVVSRTAEQVFIPLTVGGGVRTVEDVDRLLRAGADKVSVNTAAIARPELLRELSERFGSQCIVLSVDARTVPQGQPDTPSGWEVTTHGGKRGTGIDAVEWAVRGAELGVGEILLNSMDADGTKAGFDLPMIRAVRAAVHVPVIASGGAGAVEHFAPAVGAGADAVLAASVFHFGDMTIGDVKKSMRAEGITVR.

Active-site residues include Asp12 and Asp131.

This sequence belongs to the HisA/HisF family. As to quaternary structure, heterodimer of HisH and HisF.

It is found in the cytoplasm. The enzyme catalyses 5-[(5-phospho-1-deoxy-D-ribulos-1-ylimino)methylamino]-1-(5-phospho-beta-D-ribosyl)imidazole-4-carboxamide + L-glutamine = D-erythro-1-(imidazol-4-yl)glycerol 3-phosphate + 5-amino-1-(5-phospho-beta-D-ribosyl)imidazole-4-carboxamide + L-glutamate + H(+). The protein operates within amino-acid biosynthesis; L-histidine biosynthesis; L-histidine from 5-phospho-alpha-D-ribose 1-diphosphate: step 5/9. IGPS catalyzes the conversion of PRFAR and glutamine to IGP, AICAR and glutamate. The HisF subunit catalyzes the cyclization activity that produces IGP and AICAR from PRFAR using the ammonia provided by the HisH subunit. The polypeptide is Imidazole glycerol phosphate synthase subunit HisF (Rhodococcus opacus (strain B4)).